The sequence spans 231 residues: Ribose-5-phosphate isomerase A (231 aa).

Substrate contacts are provided by residues 28–31 (TGST), 83–86 (DGAD), and 96–99 (KGGG). E105 serves as the catalytic Proton acceptor. Substrate is bound at residue K123.

Belongs to the ribose 5-phosphate isomerase family. As to quaternary structure, homodimer.

The enzyme catalyses aldehydo-D-ribose 5-phosphate = D-ribulose 5-phosphate. It functions in the pathway carbohydrate degradation; pentose phosphate pathway; D-ribose 5-phosphate from D-ribulose 5-phosphate (non-oxidative stage): step 1/1. In terms of biological role, catalyzes the reversible conversion of ribose-5-phosphate to ribulose 5-phosphate. In Agrobacterium fabrum (strain C58 / ATCC 33970) (Agrobacterium tumefaciens (strain C58)), this protein is Ribose-5-phosphate isomerase A.